The following is a 944-amino-acid chain: Isoleucine--tRNA ligase (944 aa).

Residues 58 to 68 (PYANGSIHIGH) carry the 'HIGH' region motif. An L-isoleucyl-5'-AMP-binding site is contributed by glutamate 563. Residues 604 to 608 (KMSKS) carry the 'KMSKS' region motif. ATP is bound at residue lysine 607. Cysteine 907, cysteine 910, cysteine 927, and cysteine 930 together coordinate Zn(2+).

The protein belongs to the class-I aminoacyl-tRNA synthetase family. IleS type 1 subfamily. As to quaternary structure, monomer. Zn(2+) serves as cofactor.

The protein localises to the cytoplasm. It catalyses the reaction tRNA(Ile) + L-isoleucine + ATP = L-isoleucyl-tRNA(Ile) + AMP + diphosphate. Its function is as follows. Catalyzes the attachment of isoleucine to tRNA(Ile). As IleRS can inadvertently accommodate and process structurally similar amino acids such as valine, to avoid such errors it has two additional distinct tRNA(Ile)-dependent editing activities. One activity is designated as 'pretransfer' editing and involves the hydrolysis of activated Val-AMP. The other activity is designated 'posttransfer' editing and involves deacylation of mischarged Val-tRNA(Ile). The protein is Isoleucine--tRNA ligase of Salmonella choleraesuis (strain SC-B67).